Consider the following 100-residue polypeptide: Small ribosomal subunit protein uS17 (100 aa).

Belongs to the universal ribosomal protein uS17 family. Part of the 30S ribosomal subunit.

In terms of biological role, one of the primary rRNA binding proteins, it binds specifically to the 5'-end of 16S ribosomal RNA. This is Small ribosomal subunit protein uS17 from Fervidobacterium nodosum (strain ATCC 35602 / DSM 5306 / Rt17-B1).